The following is a 135-amino-acid chain: Histone H2A (135 aa).

This sequence belongs to the histone H2A family. In terms of assembly, the nucleosome is a histone octamer containing two molecules each of H2A, H2B, H3 and H4 assembled in one H3-H4 heterotetramer and two H2A-H2B heterodimers. The octamer wraps approximately 147 bp of DNA.

It localises to the nucleus. Its subcellular location is the chromosome. In terms of biological role, core component of nucleosome. Nucleosomes wrap and compact DNA into chromatin, limiting DNA accessibility to the cellular machineries which require DNA as a template. Histones thereby play a central role in transcription regulation, DNA repair, DNA replication and chromosomal stability. DNA accessibility is regulated via a complex set of post-translational modifications of histones, also called histone code, and nucleosome remodeling. This Trypanosoma cruzi protein is Histone H2A.